The sequence spans 325 residues: MIFTSSCCDNLSIDEIIERAEKGDCEAQYIVGFYYNRDSAIDSPDDEKAFYWLKLAAEQGHCEAQYSLGQKYTEDKSRHKDNEQAIFWLKKAALQGHTFASNALGWTLDRGEAPNYKEAVVWYQIAAESGMSYAQNNLGWMYRNGNGVAKDYALAFFWYKQAALQGHSDAQNNLADLYEDGKGVAQNKTLAAFWYLKSAQQGNRHAQFQIAWDYNAGEGVDQDYKQAMYWYLKAAAQGSVGAYVNIGYMYKHGQGVEKDYQAAFEWFTKAAECNDATAWYNLAIMYHYGEGRPVDLRQALDLYRKVQSSGTRDVSQEIRETEDLL.

8 Sel1-like repeats span residues 26–61 (EAQY…EQGH), 63–97 (EAQY…LQGH), 103–130 (ALGW…AESG), 132–167 (SYAQ…LQGH), 168–203 (SDAQ…QQGN), 205–239 (HAQF…AQGS), 242–275 (AYVN…ECND), and 280–305 (YNLA…LYRK).

The protein to E.coli YbeT.

This chain is Sel1-repeat-containing protein YbeQ (ybeQ), found in Escherichia coli (strain K12).